A 914-amino-acid polypeptide reads, in one-letter code: Isoleucine--tRNA ligase (914 aa).

The 'HIGH' region signature appears at 64–74 (PYANGNFHLGH). Glu557 is a binding site for L-isoleucyl-5'-AMP. A 'KMSKS' region motif is present at residues 598-602 (PMSKS). Residue Lys601 coordinates ATP. Positions 889, 892, 906, and 909 each coordinate Zn(2+).

Belongs to the class-I aminoacyl-tRNA synthetase family. IleS type 1 subfamily. Monomer. The cofactor is Zn(2+).

The protein localises to the cytoplasm. It carries out the reaction tRNA(Ile) + L-isoleucine + ATP = L-isoleucyl-tRNA(Ile) + AMP + diphosphate. Functionally, catalyzes the attachment of isoleucine to tRNA(Ile). As IleRS can inadvertently accommodate and process structurally similar amino acids such as valine, to avoid such errors it has two additional distinct tRNA(Ile)-dependent editing activities. One activity is designated as 'pretransfer' editing and involves the hydrolysis of activated Val-AMP. The other activity is designated 'posttransfer' editing and involves deacylation of mischarged Val-tRNA(Ile). The sequence is that of Isoleucine--tRNA ligase from Leptospira interrogans serogroup Icterohaemorrhagiae serovar copenhageni (strain Fiocruz L1-130).